The sequence spans 60 residues: Large ribosomal subunit protein bL32 (60 aa).

A disordered region spans residues 1–60 (MAVQQNKKSPSKRGMHRSHNALTVPGIAVEPTTGETHLRHHISPNGFYRGRQVLKNKSEA). The segment covering 9-19 (SPSKRGMHRSH) has biased composition (basic residues).

The protein belongs to the bacterial ribosomal protein bL32 family.

The chain is Large ribosomal subunit protein bL32 from Paracidovorax citrulli (strain AAC00-1) (Acidovorax citrulli).